We begin with the raw amino-acid sequence, 106 residues long: Small ribosomal subunit protein uS10 (106 aa).

This sequence belongs to the universal ribosomal protein uS10 family. Part of the 30S ribosomal subunit.

In terms of biological role, involved in the binding of tRNA to the ribosomes. This is Small ribosomal subunit protein uS10 from Caldicellulosiruptor bescii (strain ATCC BAA-1888 / DSM 6725 / KCTC 15123 / Z-1320) (Anaerocellum thermophilum).